Here is a 607-residue protein sequence, read N- to C-terminus: MDTKIGSIDACNPTNHDIGGPPNGGVSTVQNTSPLHSTTVSPCDATLGRYLARRLVEIGVTDVFSVPGDFNLTLLDHLIAEPNLKLIGCCNELNAGYAADGYARSRGVGACVVTFTVGGLSVLNAIAGAYSENLPLICIVGGPNSNDYGTNRILHHTIGLPDFTQELRCFQAVTCFQAVINNLEEAHELIDTAISTALKESKPVYISISCNLPAIPLPTFSRHPVPFMLPMKVSNQIGLDAAVEAAAEFLNKAVKPVLVGGPKMRVAKAADAFVELADASGYGLAVMPSAKGQVPEHHKHFIGTYWGAVSTAFCAEIVESADAYLFAGPIFNDYSSVGYSLLLKKEKAIIVQPDRVTIGNGPAFGCVLMKDFLSELAKRIKHNNTSYENYHRIYVPEGKPLRDNPNESLRVNVLFQHIQNMLSSESAVLAETGDSWFNCQKLKLPEGCGYEFQMQYGSIGWSVGATLGYAQAMPNRRVIACIGDGSFQVTAQDVSTMIRCGQKTIIFLINNGGYTIEVEIHDGPYNVIKNWNYTAFVEAIHNGEGKCWTAKVRCEEELVKAINTATNEEKESFCFIEVIVHKDDTSKELLEWGSRVSAANSRPPNPQ.

The disordered stretch occupies residues 1–22 (MDTKIGSIDACNPTNHDIGGPP). Substrate is bound by residues Asp69 and His156. Positions 434-516 (DSWFNCQKLK…FLINNGGYTI (83 aa)) are thiamine pyrophosphate binding. Asp484, Asn511, and Gly513 together coordinate Mg(2+). Glu517 provides a ligand contact to substrate.

Belongs to the TPP enzyme family. Homotetramer. A metal cation is required as a cofactor. It depends on thiamine diphosphate as a cofactor. In terms of tissue distribution, expressed at low levels in roots, shoots, flowers, siliques and seeds.

It catalyses the reaction a 2-oxocarboxylate + H(+) = an aldehyde + CO2. This Arabidopsis thaliana (Mouse-ear cress) protein is Pyruvate decarboxylase 2 (PDC2).